Here is an 82-residue protein sequence, read N- to C-terminus: Quinohemoprotein amine dehydrogenase subunit gamma (82 aa).

A cross-link (4-cysteinyl-glutamic acid (Cys-Glu)) is located at residues 7–16; it reads CTTSFDPGWE. 2 consecutive cross-links (3-cysteinyl-aspartic acid (Cys-Asp)) follow at residues 27 to 33 and 41 to 49; these read CQPMEAD and CWWPAQVAD. Asp33 functions as the Proton acceptor in the catalytic mechanism. Residues 37-43 constitute a cross-link (4'-cysteinyl-tryptophylquinone (Cys-Trp)); it reads CADPCWW. Trp43 is subject to Tryptophylquinone.

It belongs to the quinohemoprotein amine dehydrogenase subunit gamma family. In terms of assembly, heterotrimer of an alpha, a beta and a gamma subunit. Cysteine tryptophylquinone residue serves as cofactor. In terms of processing, the cysteine tryptophylquinone (CTQ) is generated by oxidation of the indole ring of a tryptophan residue to form tryptophylquinone, followed by covalent cross-linking with a cysteine residue.

It localises to the periplasm. It catalyses the reaction 2 Fe(III)-[cytochrome c550] + an aliphatic amine + H2O = 2 Fe(II)-[cytochrome c550] + an aldehyde + NH4(+) + 2 H(+). Its activity is regulated as follows. Inhibited by carbonyl reagents such as hydrazine, hydroxylamine, phenylhydrazine and semicarbazide. Functionally, catalyzes the oxidative deamination of a wide range of primary aliphatic and aromatic amines. The physiological electron acceptor is the constitutive cytochrome c550. The protein is Quinohemoprotein amine dehydrogenase subunit gamma (qhnDH) of Paracoccus denitrificans.